The primary structure comprises 303 residues: Lipase chaperone (303 aa).

A helical membrane pass occupies residues T7–D23.

The protein belongs to the lipase chaperone family.

It is found in the cell inner membrane. Functionally, may be involved in the folding of the extracellular lipase during its passage through the periplasm. The chain is Lipase chaperone (lifO) from Chromobacterium violaceum (strain ATCC 12472 / DSM 30191 / JCM 1249 / CCUG 213 / NBRC 12614 / NCIMB 9131 / NCTC 9757 / MK).